Consider the following 359-residue polypeptide: Type II restriction enzyme HgiDI (359 aa).

The catalysed reaction is Endonucleolytic cleavage of DNA to give specific double-stranded fragments with terminal 5'-phosphates.. Functionally, a P subtype restriction enzyme that recognizes the double-stranded sequence 5'-GRCGYC-3' and cleaves after R-2. This chain is Type II restriction enzyme HgiDI, found in Herpetosiphon aurantiacus (Herpetosiphon giganteus).